A 525-amino-acid chain; its full sequence is Lysine--tRNA ligase (525 aa).

2 residues coordinate Mg(2+): E419 and E426.

Belongs to the class-II aminoacyl-tRNA synthetase family. Homodimer. The cofactor is Mg(2+).

Its subcellular location is the cytoplasm. The enzyme catalyses tRNA(Lys) + L-lysine + ATP = L-lysyl-tRNA(Lys) + AMP + diphosphate. This chain is Lysine--tRNA ligase (lysS), found in Deinococcus radiodurans (strain ATCC 13939 / DSM 20539 / JCM 16871 / CCUG 27074 / LMG 4051 / NBRC 15346 / NCIMB 9279 / VKM B-1422 / R1).